The chain runs to 536 residues: Zinc finger protein 623 (536 aa).

Residues 57–77 (GELLGNPEGQSLGSSPSQDRG) form a disordered region. Residues 64-74 (EGQSLGSSPSQ) are compositionally biased toward polar residues. 13 C2H2-type zinc fingers span residues 123 to 145 (NPCD…RISH), 151 to 173 (YTCD…QRIH), 179 to 201 (YVCN…QRVH), 207 to 229 (FKCA…QRVH), 235 to 257 (FECK…QRIH), 263 to 285 (YECN…YQIH), 291 to 313 (YECK…QRIH), 319 to 341 (FECN…QRIH), 347 to 369 (YVCN…QRIH), 375 to 397 (YECN…QKIH), 403 to 425 (YECK…QKIH), 431 to 453 (FECK…QIIH), and 459 to 481 (YVCS…QKIH). Residue lysine 445 forms a Glycyl lysine isopeptide (Lys-Gly) (interchain with G-Cter in SUMO2) linkage. The segment at 513 to 536 (LSLSKAPIHLGERSVDKGEHTGNL) is disordered. Residues 522-536 (LGERSVDKGEHTGNL) are compositionally biased toward basic and acidic residues.

The protein belongs to the krueppel C2H2-type zinc-finger protein family.

The protein localises to the nucleus. Functionally, may be involved in transcriptional regulation. The chain is Zinc finger protein 623 (ZNF623) from Homo sapiens (Human).